We begin with the raw amino-acid sequence, 252 residues long: Trans-aconitate 2-methyltransferase (252 aa).

This sequence belongs to the methyltransferase superfamily. Tam family.

The protein resides in the cytoplasm. It carries out the reaction trans-aconitate + S-adenosyl-L-methionine = (E)-3-(methoxycarbonyl)pent-2-enedioate + S-adenosyl-L-homocysteine. Functionally, catalyzes the S-adenosylmethionine monomethyl esterification of trans-aconitate. In Escherichia coli O7:K1 (strain IAI39 / ExPEC), this protein is Trans-aconitate 2-methyltransferase.